The primary structure comprises 377 residues: Glutamate 5-kinase (377 aa).

An ATP-binding site is contributed by Lys20. Ser60, Asp147, and Asn159 together coordinate substrate. 179–180 serves as a coordination point for ATP; it reads TD. The PUA domain occupies 285–363; the sequence is AGRLVIDAGA…DKVHQVLGEA (79 aa).

It belongs to the glutamate 5-kinase family.

It is found in the cytoplasm. The enzyme catalyses L-glutamate + ATP = L-glutamyl 5-phosphate + ADP. It participates in amino-acid biosynthesis; L-proline biosynthesis; L-glutamate 5-semialdehyde from L-glutamate: step 1/2. Functionally, catalyzes the transfer of a phosphate group to glutamate to form L-glutamate 5-phosphate. The sequence is that of Glutamate 5-kinase from Acinetobacter baylyi (strain ATCC 33305 / BD413 / ADP1).